A 777-amino-acid chain; its full sequence is DISP complex protein LRCH3 (777 aa).

10 LRR repeats span residues 56-79 (AAVTGVLSLSGRKLREFPRGAANH), 81-104 (LTDTTRADLSRNRLSEIPIEACHF), 105-127 (VSLENLNLYQNCIRYIPEAILNL), 128-150 (QALTFLNISRNQLSTLPVHLCNL), 152-172 (LKVLIASNNKLVSLPEEIGHL), 173-195 (RHLMELDVSCNEIQTIPSQIGNL), 196-218 (EALRDLNVRRNHLVHLPEELAEL), 220-239 (LIRLDFSCNKITTIPVCYRN), 240-264 (LRHLQTITLDNNPLQSPPAQICIKG), and 266-290 (VHIFKYLNIQACKIAPDLPDYDRRP). Positions 56-290 (AAVTGVLSLS…PDLPDYDRRP (235 aa)) are mediates interaction with DOCK7. Ser-324, Ser-415, and Ser-419 each carry phosphoserine. The segment at 382–648 (TAEEEEAEVR…DSTDSITGQN (267 aa)) is mediates direct interaction with MYO6. Residues 568 to 590 (FTPLKSDDRPNALLSSPATETVH) are disordered. Phosphoserine occurs at positions 611 and 628. Positions 621 to 653 (ETNKGHASPLPPSAAPTTDSTDSITGQNSRQRE) are disordered. The span at 635–645 (APTTDSTDSIT) shows a compositional bias: low complexity. In terms of domain architecture, Calponin-homology (CH) spans 652-765 (REEELELIDQ…VTVQALLELA (114 aa)).

As to quaternary structure, component of the DOCK7-induced septin displacement/DISP complex, at least composed of DOCK7, LRCH3 and MYO6.

Its subcellular location is the cytoplasm. Functionally, as part of the DISP complex, may regulate the association of septins with actin and thereby regulate the actin cytoskeleton. The polypeptide is DISP complex protein LRCH3 (Homo sapiens (Human)).